The primary structure comprises 1407 residues: DNA-directed RNA polymerase subunit beta' (1407 aa).

Positions 70, 72, 85, and 88 each coordinate Zn(2+). Positions 460, 462, and 464 each coordinate Mg(2+). Zn(2+) is bound by residues C814, C888, C895, and C898.

This sequence belongs to the RNA polymerase beta' chain family. The RNAP catalytic core consists of 2 alpha, 1 beta, 1 beta' and 1 omega subunit. When a sigma factor is associated with the core the holoenzyme is formed, which can initiate transcription. Mg(2+) serves as cofactor. It depends on Zn(2+) as a cofactor.

It carries out the reaction RNA(n) + a ribonucleoside 5'-triphosphate = RNA(n+1) + diphosphate. DNA-dependent RNA polymerase catalyzes the transcription of DNA into RNA using the four ribonucleoside triphosphates as substrates. The polypeptide is DNA-directed RNA polymerase subunit beta' (Erwinia tasmaniensis (strain DSM 17950 / CFBP 7177 / CIP 109463 / NCPPB 4357 / Et1/99)).